We begin with the raw amino-acid sequence, 298 residues long: Methylsterol monooxygenase 1-1 (298 aa).

The next 3 membrane-spanning stretches (helical) occupy residues 42–62, 96–116, and 118–138; these read ILFL…VELA, FILV…MIEI, and SGLP…YFLI. One can recognise a Fatty acid hydroxylase domain in the interval 132–267; sequence LVVYFLIEDY…FTYCDYIYGT (136 aa). The short motif at 147-151 is the Histidine box-1 element; the sequence is HRFFH. The Histidine box-2 signature appears at 160 to 164; sequence HRVHH. Residues 189-209 form a helical membrane-spanning segment; it reads TFMGPAIAPGHMITFWLWIAL. The Histidine box-3 signature appears at 239-245; sequence YHDYHHY.

The protein belongs to the sterol desaturase family. Interacts with ACBP1. The cofactor is Fe cation. In terms of tissue distribution, expressed in rosettes, stems, roots, floral buds, flowers and siliques.

Its subcellular location is the endoplasmic reticulum membrane. It carries out the reaction 4,4-dimethyl-5alpha-cholest-7-en-3beta-ol + 6 Fe(II)-[cytochrome b5] + 3 O2 + 5 H(+) = 4alpha-carboxy-4beta-methyl-5alpha-cholest-7-ene-3beta-ol + 6 Fe(III)-[cytochrome b5] + 4 H2O. It catalyses the reaction 24-methylenecycloartanol + 6 Fe(II)-[cytochrome b5] + 3 O2 + 5 H(+) = 4alpha-carboxy-4beta,14alpha-dimethyl-9beta,19-cyclo-5alpha-ergost-24(24(1))-en-3beta-ol + 6 Fe(III)-[cytochrome b5] + 4 H2O. In terms of biological role, non-heme iron oxygenase involved in sterols biosynthesis by catalyzing the removal of the first methyl group at the C-4 position. 4,4-dimethyl-9-beta,19-cyclopropylsterols such as 24-methylenecycloartanol are the preferred substrates. Acts as a rate-limiting enzyme in the sterol pathway via interaction with ACBP1; sterols serve as lipid modulators for gene expression of homeodomain-leucine zipper IV transcription factors. Together with SMO1-2, involved in the maintenance of sterol composition to balance auxin and cytokinin activities during embryogenesis. The polypeptide is Methylsterol monooxygenase 1-1 (Arabidopsis thaliana (Mouse-ear cress)).